Here is a 238-residue protein sequence, read N- to C-terminus: Ribosomal RNA small subunit methyltransferase G (238 aa).

S-adenosyl-L-methionine contacts are provided by residues G99, L104, 122–124, 150–151, and R164; these read DAT and VE.

This sequence belongs to the methyltransferase superfamily. RNA methyltransferase RsmG family.

It is found in the cytoplasm. In terms of biological role, specifically methylates the N7 position of a guanine in 16S rRNA. The protein is Ribosomal RNA small subunit methyltransferase G of Chlorobium luteolum (strain DSM 273 / BCRC 81028 / 2530) (Pelodictyon luteolum).